A 270-amino-acid polypeptide reads, in one-letter code: ES1 protein, mitochondrial (270 aa).

Expressed specifically in the inner segments of cone photoreceptor cells of the retina (at protein level).

The protein localises to the mitochondrion. Functionally, plays a role in promoting mitochondrial enlargement in cone photoreceptor cells in a fusion-independent and ATP-dependent manner. This chain is ES1 protein, mitochondrial, found in Danio rerio (Zebrafish).